The primary structure comprises 482 residues: Butyrophilin-like protein 2 (482 aa).

Residues 1-6 lie on the Cytoplasmic side of the membrane; that stretch reads MVDFPG. Residues 7–23 form a helical; Signal-anchor for type II membrane protein membrane-spanning segment; it reads YNLSGAVASFLFILLTM. Over 24–482 the chain is Extracellular; the sequence is KQSEDFRVIG…VAVGLPRKRS (459 aa). Ig-like V-type domains are found at residues 29 to 140, 142 to 234, and 236 to 355; these read FRVI…LLLK, AGLG…SVIS, and PEKL…ASLD. 3 disulfide bridges follow: cysteine 50/cysteine 124, cysteine 164/cysteine 218, and cysteine 267/cysteine 341. Residue asparagine 210 is glycosylated (N-linked (GlcNAc...) asparagine). Asparagine 427 is a glycosylation site (N-linked (GlcNAc...) asparagine).

This sequence belongs to the immunoglobulin superfamily. BTN/MOG family. As to expression, expressed in brain, heart, kidney, liver, pancreas, ovary, leukocyte, small intestine, testis and thymus.

The protein resides in the membrane. In terms of biological role, negative regulator of T-cell proliferation. The chain is Butyrophilin-like protein 2 from Homo sapiens (Human).